The chain runs to 192 residues: uncharacterized protein (192 aa).

This is an uncharacterized protein from Haemophilus influenzae (strain ATCC 51907 / DSM 11121 / KW20 / Rd).